Consider the following 403-residue polypeptide: RNA-binding motif, single-stranded-interacting protein 1 (403 aa).

A disordered region spans residues P30 to W56. A compositionally biased stretch (low complexity) spans S40–S54. RRM domains follow at residues T62 to Q135 and T141 to G226. Residue T208 is modified to Phosphothreonine.

Its subcellular location is the nucleus. In terms of biological role, single-stranded DNA binding protein that interacts with the region upstream of the C-myc gene. Binds specifically to the DNA sequence motif 5'-[AT]CT[AT][AT]T-3'. Probably has a role in DNA replication. The chain is RNA-binding motif, single-stranded-interacting protein 1 (RBMS1) from Bos taurus (Bovine).